The primary structure comprises 208 residues: Small ribosomal subunit protein uS9c (208 aa).

The N-terminal 52 residues, 1–52, are a transit peptide targeting the chloroplast; sequence MASITNLASSLSSLSFSSQVSQRPNTISFPRANSVFALPAKSARRASLSITA.

Belongs to the universal ribosomal protein uS9 family.

It is found in the plastid. The protein localises to the chloroplast. Functionally, binds directly to 16S ribosomal RNA. The polypeptide is Small ribosomal subunit protein uS9c (RPS9) (Arabidopsis thaliana (Mouse-ear cress)).